The sequence spans 535 residues: Solute carrier family 22 member 7 (535 aa).

Transmembrane regions (helical) follow at residues 21 to 41 (LVLMALPRMLLPMHFLLPVFM), 144 to 164 (ITSTCFFIGVLVGAVVYGYLS), 178 to 198 (VSSLVLGLMSAASINYIMFVV), 202 to 222 (LTGSALAGFTIIVLPLELEWL), 232 to 252 (VISTVFWSGGVLLLALVGYLI), 257 to 277 (WLLLAATLPCVPGIISIWWVP), 344 to 364 (ISLCCMMVWFGVNFSYYGLTL), 375 to 395 (QTQLLFGAVELPSKIMVYFLV), 402 to 422 (LTEAGMLLGAALTFGTSLLVS), 429 to 449 (ITALVVVGKAFSEAAFTTAYL), 464 to 484 (LGLTALMGRLGASLAPLAALL), and 489 to 509 (LLLPKVAYGGIALVAACTALL).

The protein belongs to the major facilitator (TC 2.A.1) superfamily. Organic cation transporter (TC 2.A.1.19) family. In terms of tissue distribution, expressed in liver and kidney. Expressed at low levels in adipose tissue. Expressed in fetal liver. In kidney, expressed at the brush border of the proximal tubule S3 segment (S3) in the outer stripe and medullary rays. In kidney, expression is higher in female than male.

Its subcellular location is the basolateral cell membrane. The protein localises to the apical cell membrane. The protein resides in the cell membrane. It carries out the reaction orotate(out) + L-glutamate(in) = orotate(in) + L-glutamate(out). The enzyme catalyses 3',5'-cyclic GMP(in) = 3',5'-cyclic GMP(out). The catalysed reaction is GMP(in) = GMP(out). It catalyses the reaction 2'-deoxyguanosine(in) = 2'-deoxyguanosine(out). It carries out the reaction GDP(in) = GDP(out). The enzyme catalyses guanosine(in) = guanosine(out). The catalysed reaction is GTP(in) = GTP(out). It catalyses the reaction 3',5'-cyclic AMP(in) = 3',5'-cyclic AMP(out). It carries out the reaction creatinine(in) = creatinine(out). The enzyme catalyses prostaglandin E2(out) = prostaglandin E2(in). The catalysed reaction is 2-oxoglutarate(in) = 2-oxoglutarate(out). It catalyses the reaction glutarate(in) = glutarate(out). It carries out the reaction urate(out) = urate(in). The enzyme catalyses estrone 3-sulfate(out) = estrone 3-sulfate(in). Functions as a Na(+)-independent bidirectional multispecific transporter. Contributes to the renal and hepatic elimination of endogenous organic compounds from the systemic circulation into the urine and bile, respectively. Capable of transporting a wide range of purine and pyrimidine nucleobases, nucleosides, and nucleotides with cGMP, 2'deoxyguanosine and GMP being the preferred substrates. Functions as a pH- and chloride-independent cGMP bidirectional facilitative transporter that can regulate both intracellular and extracellular levels of cGMP and may be involved in cGMP signaling pathways. Mediates orotate/glutamate bidirectional exchange and most likely display a physiological role in hepatic release of glutamate into the blood. Involved in renal secretion and possible reabsorption of creatinine. Able to uptake prostaglandin E2 (PGE2) and may contribute to PGE2 renal excretion. Also transports alpha-ketoglutarate and urate. Apart from the orotate/glutamate exchange, the counterions for the uptake of other SLC22A7/OAT2 substrates remain to be identified. In Rattus norvegicus (Rat), this protein is Solute carrier family 22 member 7.